A 276-amino-acid polypeptide reads, in one-letter code: uncharacterized protein (276 aa).

This sequence to E.coli YjfZ.

This is an uncharacterized protein from Escherichia coli (strain K12).